The chain runs to 1560 residues: Tenascin-N (1560 aa).

Positions 1-26 (MGLWGMLAFPLGFLLASVLLVASAPA) are cleaved as a signal peptide. 3 EGF-like domains span residues 167 to 198 (DQPT…VDCA), 199 to 229 (YAAC…EDCS), and 230 to 260 (EQRC…PDCS). 9 disulfides stabilise this stretch: C171–C181, C175–C186, C188–C197, C202–C212, C206–C217, C219–C228, C233–C243, C237–C248, and C250–C259. Fibronectin type-III domains are found at residues 264–353 (APQG…DLAV), 354–444 (VGTA…TEID), 445–532 (GPTN…TEID), 533–622 (SPEN…IDSP), 623–706 (KNLV…APTD), 709–798 (GPKN…IDSP), 799–882 (KNLV…APTD), 885–970 (GPKN…APTD), 973–1062 (SPKN…IDSP), 1063–1144 (KNLV…TKAP), 1149–1238 (SPKN…IDPP), and 1239–1325 (RNLR…VDAR). Disordered stretches follow at residues 868–888 (GTQE…GPKN) and 1044–1063 (GARE…DSPK). Over residues 1044–1061 (GARESKKANTEGHTDIDS) the composition is skewed to basic and acidic residues. A Fibrinogen C-terminal domain is found at 1323–1540 (DARFPHPSDC…YVELKIRPFG (218 aa)). An N-linked (GlcNAc...) asparagine glycan is attached at N1411.

This sequence belongs to the tenascin family. Homohexamer. In terms of tissue distribution, highest expression in kidney followed by spleen and brain. In brain, highest expression is found in hippocampus, cerebellum and olfactory bulb. Expressed in aortic valve, corneal limbus. Expressed in ribs periosteum. During a fracture repair process, expression increases in cells of newly formed perichondrium/peristeum surrounding the cartalaginous callus.

It is found in the secreted. Its subcellular location is the extracellular space. The protein resides in the extracellular matrix. In terms of biological role, extracellular matrix protein that seems to be a ligand for ITGA8:ITGB1, ITGAV:ITGB1 and ITGA4:ITGB1. Involved in neurite outgrowth and cell migration in hippocampal explants. During endochondral bone formation, inhibits proliferation and differentiation of proteoblasts mediated by canonical WNT signaling. In tumors, stimulates angiogenesis by elongation, migration and sprouting of endothelial cells. Expressed in most mammary tumors, may facilitate tumorigenesis by supporting the migratory behavior of breast cancer cells. This Mus musculus (Mouse) protein is Tenascin-N.